Consider the following 60-residue polypeptide: Large ribosomal subunit protein bL32B (60 aa).

Positions 1-19 are enriched in basic residues; that stretch reads MAVPKRKMSRANTRHRRSQ. Positions 1-20 are disordered; the sequence is MAVPKRKMSRANTRHRRSQW.

This sequence belongs to the bacterial ribosomal protein bL32 family.

This is Large ribosomal subunit protein bL32B from Saccharopolyspora erythraea (strain ATCC 11635 / DSM 40517 / JCM 4748 / NBRC 13426 / NCIMB 8594 / NRRL 2338).